The following is a 215-amino-acid chain: MGATAGWAVTVYDKPASFFKEAPLDLQHRLFMKLGSTHSPFRARSEPEDPDTERSAFTERDSGSGLVTRLHERPALLVSSTSWTEFEQLTLDGQNLPSLVCVITGKGPLREYYSRLIHQKHFQHIQVCIPWLEGRGLPPLLGSVDLDVCLDTSSSGLDLPMKVVDMFRCCLPACAVNFKCLHELVKHEENRLVFEDSEELAAQLQYFADAFLKLS.

The interval 40–66 (PFRARSEPEDPDTERSAFTERDSGSGL) is disordered. The span at 43 to 62 (ARSEPEDPDTERSAFTERDS) shows a compositional bias: basic and acidic residues.

The protein belongs to the glycosyltransferase group 1 family.

Putative glycosyltransferase. The polypeptide is Putative glycosyltransferase ALG1L2 (ALG1L2) (Homo sapiens (Human)).